Consider the following 257-residue polypeptide: Protein windbeutel (257 aa).

A signal peptide spans M1–A21. The CXXC motif stretch occupies residues C24–C27. A Prevents secretion from ER motif is present at residues K254–L257.

Homodimer. Interacts with pip; the interaction is direct and does not require pip to be folded. Briefly expressed in the follicle cells of the ovary, at around the time when the dorsoventral axis of the egg chamber is first established.

Its subcellular location is the endoplasmic reticulum lumen. Probable chaperone protein involved in dorsoventral axis patterning in early embryos. Probably acts by folding and targeting pipe (pip) into the Golgi. The chain is Protein windbeutel from Drosophila melanogaster (Fruit fly).